A 350-amino-acid chain; its full sequence is Small ribosomal subunit protein uS3 (350 aa).

Residues 38–106 (IRKMMSRGME…QVQLNILEVK (69 aa)) enclose the KH type-2 domain. Positions 211 to 350 (AEREAQEALQ…TPGTPEKAEE (140 aa)) are disordered. A compositionally biased stretch (basic residues) spans 222–232 (QTRRDRPRRGP). Over residues 261-350 (NAPAAETAAS…TPGTPEKAEE (90 aa)) the composition is skewed to low complexity.

The protein belongs to the universal ribosomal protein uS3 family. As to quaternary structure, part of the 30S ribosomal subunit. Forms a tight complex with proteins S10 and S14.

Its function is as follows. Binds the lower part of the 30S subunit head. Binds mRNA in the 70S ribosome, positioning it for translation. This is Small ribosomal subunit protein uS3 from Frankia alni (strain DSM 45986 / CECT 9034 / ACN14a).